The following is a 955-amino-acid chain: MSQLLQQLGTDNEFIRRHNGPASSEHQHMLNTIGAETLQQLIEETVPSSIRLPQPMQLPHGLSENAMLAELKQIAQQNTLNTSYIGQGYYNTHTPNVILRNVLENPGWYTAYTPYQPEISQGRLEALLNYQQMVMDLTGLEIANASLLDEATAAAEAMTLCKRGGKSKSNLFFVADDVHPQTLAVIKTRAKFIGFDVVVDHESNLDSHDVFGALLQYPGTTGEVKDLTDLIAQAHTKKTLVIVATDLLASVLLKPVGEMGADIAIGSAQRFGVPMGYGGPHAAFMATREKLKRSMPGRVIGVSIDSKGNQALRMAMQTREQHIRREKATSNICTAQALLANMASFYAVYHGPEGLKTIARRVHHFTAIVAKALQTAGFELEHQHFFDTLTVKTEQQTDILYTKALASSINLRKFDTKLGISFDETTTVSDLVTLLAVFGIDNAECETLSAEVGKDEFAAIPKHCQRTSSFLTHPVFNTYHSETQMLRYLKKLENKDFSLTHGMIPLGSCTMKLNAVAEMLPVTWPEFGGIHPFAPLNQAAGYTTLATSLKSMLCEITGYDEFSLQPNSGASGEYAGLIAIQRYHESRGDAHRNVCLIPSSAHGTNPATASMVSMKVVVVKCDENGNIDMIDLAEKIEKHQENLSSIMITYPSTHGVYEEQVREVCDMVHAAGGQVYLDGANMNAQVGLTSPGFIGSDVSHLNLHKTFCIPHGGGGPGMGPIGVKSHLAPFLPGHTENGVQGMDYAVSAADLGSASILPISWAYIAMMGEMGLTEATKVAILNANYVMERLRPHYPVLYRGTNGRIAHECIIDIRPLKETTGISEEDIAKRLMDFGFHAPTMSFPVAGTLMVEPTESEDLAELDRFCDAMIAIREEMNKVEQGEWPLDNNPLVNAPHTQVDLMSDSWEHPYTREVACFPSSQSKDSKYWPTVNRVDNVYGDRNLICSCPSIENYEE.

Position 705 is an N6-(pyridoxal phosphate)lysine (Lys705).

It belongs to the GcvP family. In terms of assembly, the glycine cleavage system is composed of four proteins: P, T, L and H. Pyridoxal 5'-phosphate is required as a cofactor.

The enzyme catalyses N(6)-[(R)-lipoyl]-L-lysyl-[glycine-cleavage complex H protein] + glycine + H(+) = N(6)-[(R)-S(8)-aminomethyldihydrolipoyl]-L-lysyl-[glycine-cleavage complex H protein] + CO2. Its function is as follows. The glycine cleavage system catalyzes the degradation of glycine. The P protein binds the alpha-amino group of glycine through its pyridoxal phosphate cofactor; CO(2) is released and the remaining methylamine moiety is then transferred to the lipoamide cofactor of the H protein. This Aliivibrio fischeri (strain ATCC 700601 / ES114) (Vibrio fischeri) protein is Glycine dehydrogenase (decarboxylating).